A 255-amino-acid polypeptide reads, in one-letter code: NAD kinase (255 aa).

The Proton acceptor role is filled by D44. Residues 44–45 (DG), H49, 114–115 (NE), D144, A152, 155–160 (SAYNLS), and Q216 contribute to the NAD(+) site.

It belongs to the NAD kinase family. A divalent metal cation serves as cofactor.

It localises to the cytoplasm. It carries out the reaction NAD(+) + ATP = ADP + NADP(+) + H(+). In terms of biological role, involved in the regulation of the intracellular balance of NAD and NADP, and is a key enzyme in the biosynthesis of NADP. Catalyzes specifically the phosphorylation on 2'-hydroxyl of the adenosine moiety of NAD to yield NADP. This Rickettsia typhi (strain ATCC VR-144 / Wilmington) protein is NAD kinase.